A 56-amino-acid polypeptide reads, in one-letter code: Large ribosomal subunit protein eL40 (56 aa).

Belongs to the eukaryotic ribosomal protein eL40 family.

The polypeptide is Large ribosomal subunit protein eL40 (Metallosphaera sedula (strain ATCC 51363 / DSM 5348 / JCM 9185 / NBRC 15509 / TH2)).